Here is a 110-residue protein sequence, read N- to C-terminus: Ubiquitin-related modifier 1 (110 aa).

Position 110 is a 1-thioglycine (glycine 110). Glycine 110 participates in a covalent cross-link: Glycyl lysine isopeptide (Gly-Lys) (interchain with K-? in acceptor proteins).

The protein belongs to the URM1 family. As to quaternary structure, homodimer; homodimerization may provide an autoprotection to the highly active C-terminal residue before attacking its substrates. Forms a conjugate with the target protein AHP1. C-terminal thiocarboxylation occurs in 2 steps, it is first acyl-adenylated (-COAMP) via the hesA/moeB/thiF part of UBA4, then thiocarboxylated (-COSH) via the rhodanese domain of UBA4.

It is found in the cytoplasm. It functions in the pathway tRNA modification; 5-methoxycarbonylmethyl-2-thiouridine-tRNA biosynthesis. Acts as a sulfur carrier required for 2-thiolation of mcm(5)S(2)U at tRNA wobble positions of cytosolic tRNA(Lys), tRNA(Glu) and tRNA(Gln). Serves as sulfur donor in tRNA 2-thiolation reaction by being thiocarboxylated (-COSH) at its C-terminus by the MOCS3 homolog UBA4. The sulfur is then transferred to tRNA to form 2-thiolation of mcm(5)S(2)U. Prior mcm(5) tRNA modification by the elongator complex is required for 2-thiolation. Also acts as a ubiquitin-like protein (UBL) that is covalently conjugated via an isopeptide bond to lysine residues of target proteins such as AHP1. Conjugation does not depend on the canonical cascade of E2 ubiquitin-conjugating enzymes and/or E3 ligases. The conjugation reaction requires a thiocarboxylated C-terminus of URM1 and a peroxidatic cysteine in the target protein, as the sulfur atom of the URM1 thiocarboxyl group is transferred to redox-active cysteine residues in the target protein. Oxidative stress specifically induces the formation of UBL-protein conjugates. Covalent modification with URM1 promotes the phase separation of a wide range of proteins into condensates like stress granules. The chain is Ubiquitin-related modifier 1 from Chaetomium thermophilum (strain DSM 1495 / CBS 144.50 / IMI 039719) (Thermochaetoides thermophila).